The primary structure comprises 503 residues: Aspartyl/glutamyl-tRNA(Asn/Gln) amidotransferase subunit B (503 aa).

The protein belongs to the GatB/GatE family. GatB subfamily. In terms of assembly, heterotrimer of A, B and C subunits.

The enzyme catalyses L-glutamyl-tRNA(Gln) + L-glutamine + ATP + H2O = L-glutaminyl-tRNA(Gln) + L-glutamate + ADP + phosphate + H(+). It carries out the reaction L-aspartyl-tRNA(Asn) + L-glutamine + ATP + H2O = L-asparaginyl-tRNA(Asn) + L-glutamate + ADP + phosphate + 2 H(+). Allows the formation of correctly charged Asn-tRNA(Asn) or Gln-tRNA(Gln) through the transamidation of misacylated Asp-tRNA(Asn) or Glu-tRNA(Gln) in organisms which lack either or both of asparaginyl-tRNA or glutaminyl-tRNA synthetases. The reaction takes place in the presence of glutamine and ATP through an activated phospho-Asp-tRNA(Asn) or phospho-Glu-tRNA(Gln). The sequence is that of Aspartyl/glutamyl-tRNA(Asn/Gln) amidotransferase subunit B from Roseobacter denitrificans (strain ATCC 33942 / OCh 114) (Erythrobacter sp. (strain OCh 114)).